The primary structure comprises 364 residues: A-type ATP synthase subunit C (364 aa).

The protein belongs to the V-ATPase V0D/AC39 subunit family. In terms of assembly, has multiple subunits with at least A(3), B(3), C, D, E, F, H, I and proteolipid K(x).

Its subcellular location is the cell membrane. Functionally, component of the A-type ATP synthase that produces ATP from ADP in the presence of a proton gradient across the membrane. The sequence is that of A-type ATP synthase subunit C from Desulfurococcus sp. (strain SY).